The primary structure comprises 1094 residues: AP-3 complex subunit beta-1 (1094 aa).

A compositionally biased stretch (polar residues) spans 1-11 (MSSNSFPYNEQ). Disordered stretches follow at residues 1-31 (MSSN…ISPS) and 268-292 (DNGK…KPYT). A phosphoserine mark is found at Ser-276 and Ser-609. Residues 662 to 811 (PAGKAKQENS…EKKTKQDRTP (150 aa)) are disordered. A compositionally biased stretch (basic and acidic residues) spans 666-677 (AKQENSAKKFYS). Composition is skewed to acidic residues over residues 678–696 (ESEE…ESES) and 705–726 (ESGE…EQDS). 2 stretches are compositionally biased toward basic and acidic residues: residues 727–738 (ESGRESGLENKR) and 748–764 (GKSD…KSKT). Ser-750 and Ser-752 each carry phosphoserine. Over residues 765-777 (SDSSNDESSSIED) the composition is skewed to low complexity. Acidic residues predominate over residues 778–791 (SSSDSESESEPESE). A compositionally biased stretch (basic and acidic residues) spans 792 to 811 (SESRRVTKEKEKKTKQDRTP).

It belongs to the adaptor complexes large subunit family. As to quaternary structure, adaptor protein complex 3 (AP-3) is a heterotetramer composed of two large adaptins (delta-type subunit AP3D1 and beta-type subunit AP3B1 or AP3B2), a medium adaptin (mu-type subunit AP3M1 or AP3M2) and a small adaptin (sigma-type subunit APS1 or AP3S2). AP-3 associates with the BLOC-1 complex. Interacts with KIF3A; interaction is direct; interaction is impaired by pyrophosphorylation of AP3B1. Phosphorylated on serine residues. In terms of processing, pyrophosphorylation by 5-diphosphoinositol pentakisphosphate (5-IP7) impairs interaction with KIF3A. Serine pyrophosphorylation is achieved by Mg(2+)-dependent, but enzyme independent transfer of a beta-phosphate from a inositol pyrophosphate to a pre-phosphorylated serine residue. Ubiquitously expressed.

It is found in the cytoplasmic vesicle. The protein resides in the clathrin-coated vesicle membrane. It localises to the golgi apparatus. In terms of biological role, subunit of non-clathrin- and clathrin-associated adaptor protein complex 3 (AP-3) that plays a role in protein sorting in the late-Golgi/trans-Golgi network (TGN) and/or endosomes. The AP complexes mediate both the recruitment of clathrin to membranes and the recognition of sorting signals within the cytosolic tails of transmembrane cargo molecules. AP-3 appears to be involved in the sorting of a subset of transmembrane proteins targeted to lysosomes and lysosome-related organelles. In concert with the BLOC-1 complex, AP-3 is required to target cargos into vesicles assembled at cell bodies for delivery into neurites and nerve terminals. This chain is AP-3 complex subunit beta-1 (AP3B1), found in Homo sapiens (Human).